Here is a 318-residue protein sequence, read N- to C-terminus: MAKELKGPGFHFDVHTDLRADQKAEVLIEALPWLEEFAGQRIVIKYGGNAMIDDHLKACFAEDMVFLRQVGLHPVVVHGGGPQISQMLKALGIKSEFKGGLRVTTPEAMDVVRMVLTGKVSRELVGLINAHGPFAVGLSGEDGALFSAMQRKPVIDGKPTDIGLVGDVVSVDASAVEDLINAGRIPVVSSVAPNEDDATEVLNVNADSAAAALAAALGASKLVVLTDVDGLYADWPDRDSLIGRIGVENLRDMLPDLESGMRPKMEACVRAIDGGVPRAHIIDGRKPHSILNEIFTTDGIGTMVVPEDGIEMRSSYGN.

Residues 80–81, Arg-102, and Asn-203 contribute to the substrate site; that span reads GG.

This sequence belongs to the acetylglutamate kinase family. ArgB subfamily.

The protein localises to the cytoplasm. It catalyses the reaction N-acetyl-L-glutamate + ATP = N-acetyl-L-glutamyl 5-phosphate + ADP. Its pathway is amino-acid biosynthesis; L-arginine biosynthesis; N(2)-acetyl-L-ornithine from L-glutamate: step 2/4. Its function is as follows. Catalyzes the ATP-dependent phosphorylation of N-acetyl-L-glutamate. This Bifidobacterium adolescentis (strain ATCC 15703 / DSM 20083 / NCTC 11814 / E194a) protein is Acetylglutamate kinase.